The primary structure comprises 356 residues: Peptide chain release factor 1 (356 aa).

Gln-235 carries the N5-methylglutamine modification.

It belongs to the prokaryotic/mitochondrial release factor family. In terms of processing, methylated by PrmC. Methylation increases the termination efficiency of RF1.

The protein localises to the cytoplasm. Its function is as follows. Peptide chain release factor 1 directs the termination of translation in response to the peptide chain termination codons UAG and UAA. The polypeptide is Peptide chain release factor 1 (Hydrogenobaculum sp. (strain Y04AAS1)).